A 1105-amino-acid polypeptide reads, in one-letter code: KAT8 regulatory NSL complex subunit 1 (1105 aa).

Residue Lys-104 is modified to N6-acetyllysine. 2 disordered regions span residues 145–211 and 225–263; these read GQTA…CTLP and NNST…GVKL. Positions 225-258 are enriched in polar residues; sequence NNSTANKSSVNSMEQPALQGSSRLSPGTDSSSNL. Residue Ser-249 is modified to Phosphoserine. A Glycyl lysine isopeptide (Lys-Gly) (interchain with G-Cter in SUMO2) cross-link involves residue Lys-262. The residue at position 268 (Ser-268) is a Phosphoserine. The stretch at 283 to 314 forms a coiled coil; the sequence is RITALLRRQADIESRARRLQKRLQVVQAKQVE. Residue Lys-331 forms a Glycyl lysine isopeptide (Lys-Gly) (interchain with G-Cter in SUMO2) linkage. 2 disordered regions span residues 399-426 and 733-857; these read DSDV…PEQR and TAKL…RRGE. 2 stretches are compositionally biased toward basic and acidic residues: residues 741 to 753 and 780 to 804; these read TRPD…HLDD and DPNH…HHTD. Residues 827–850 show a composition bias toward low complexity; it reads STSSDSPAPASSSSQVTASTSQQP. Residues 850-882 form a required for activation of KAT8 histone acetyltransferase activity region; sequence PVRRRRGESSFDINNIVIPMSVAATTRVEKLQY. In terms of domain architecture, PEHE spans 884 to 1035; sequence EILTPSWREV…GLDEQSVQPW (152 aa). Residues 910-928 form an interaction with KAT8 HAT domain region; that stretch reads EDLSDAAFAALHAKCEEME. Positions 938–1034 are disordered; sequence VPPQRRGSRS…LGLDEQSVQP (97 aa). The span at 955 to 965 shows a compositional bias: polar residues; it reads TTPQLGSANPS. The segment covering 975–988 has biased composition (low complexity); sequence SSSHSLSEYSHGQS. Phosphoserine is present on residues Ser-991 and Ser-994. Thr-1003 is subject to Phosphothreonine. Residues 1008–1019 are compositionally biased toward basic and acidic residues; sequence DTPRHLASEDTR. The residue at position 1045 (Ser-1045) is a Phosphoserine. The segment at 1058–1105 is disordered; the sequence is ERAARCTRRTSGSKTGRETEAAPTSPPIVPLKSRHLVAAATAQRPTHR.

Component of the NSL complex at least composed of MOF/KAT8, KANSL1, KANSL2, KANSL3, MCRS1, PHF20, OGT1/OGT, WDR5 and HCFC1. Interacts (via PEHE domain) with KAT8 (via HAT domain); the interaction is direct. Component of some MLL1/MLL complex, at least composed of the core components KMT2A/MLL1, ASH2L, HCFC1, WDR5 and RBBP5, as well as the facultative components BACC1, CHD8, E2F6, HSP70, INO80C, KANSL1, LAS1L, MAX, MCRS1, MGA, KAT8/MOF, PELP1, PHF20, PRP31, RING2, RUVB1/TIP49A, RUVB2/TIP49B, SENP3, TAF1, TAF4, TAF6, TAF7, TAF9 and TEX10. As to expression, expressed in the brain.

It is found in the nucleus. Its subcellular location is the chromosome. The protein localises to the centromere. The protein resides in the kinetochore. It localises to the mitochondrion. It is found in the cytoplasm. Its subcellular location is the cytoskeleton. The protein localises to the spindle pole. Non-catalytic component of the NSL histone acetyltransferase complex, a multiprotein complex that mediates histone H4 acetylation at 'Lys-5'- and 'Lys-8' (H4K5ac and H4K8ac) at transcription start sites and promotes transcription initiation. The NSL complex also acts as a regulator of gene expression in mitochondria. In addition to its role in transcription, KANSL1 also plays an essential role in spindle assembly during mitosis. Associates with microtubule ends and contributes to microtubule stability. This is KAT8 regulatory NSL complex subunit 1 (KANSL1) from Homo sapiens (Human).